The chain runs to 370 residues: Glutamine synthetase (370 aa).

In terms of domain architecture, GS beta-grasp spans 23-102 (VLAEYVWIDA…VLTECWNNDG (80 aa)). Residues 40–69 (CKTLDKKPSSVEDLPEWNFDGSSTGQAPGH) form a disordered region. The GS catalytic domain maps to 109-370 (HRHESAKLMK…FKEYARESSD (262 aa)).

This sequence belongs to the glutamine synthetase family. Homooctamer.

It is found in the cytoplasm. It carries out the reaction L-glutamate + NH4(+) + ATP = L-glutamine + ADP + phosphate + H(+). The chain is Glutamine synthetase (GLN1) from Debaryomyces hansenii (strain ATCC 36239 / CBS 767 / BCRC 21394 / JCM 1990 / NBRC 0083 / IGC 2968) (Yeast).